The sequence spans 77 residues: Conotoxin PnMKLT1-0122 (77 aa).

The N-terminal stretch at 1-22 is a signal peptide; sequence MKLTCMMIVAVLFLTAWTFATA. The propeptide occupies 23–49; it reads EDPRNGLENLFSKAHHEMKNPEDSKLN. Intrachain disulfides connect Cys52–Cys67, Cys59–Cys71, and Cys66–Cys76.

It belongs to the conotoxin O1 superfamily. As to expression, expressed by the venom duct.

It localises to the secreted. The chain is Conotoxin PnMKLT1-0122 from Conus pennaceus (Feathered cone).